The chain runs to 190 residues: Adenine phosphoribosyltransferase (190 aa).

The protein belongs to the purine/pyrimidine phosphoribosyltransferase family. In terms of assembly, homodimer.

The protein localises to the cytoplasm. It carries out the reaction AMP + diphosphate = 5-phospho-alpha-D-ribose 1-diphosphate + adenine. It participates in purine metabolism; AMP biosynthesis via salvage pathway; AMP from adenine: step 1/1. In terms of biological role, catalyzes a salvage reaction resulting in the formation of AMP, that is energically less costly than de novo synthesis. The polypeptide is Adenine phosphoribosyltransferase (Treponema denticola (strain ATCC 35405 / DSM 14222 / CIP 103919 / JCM 8153 / KCTC 15104)).